An 835-amino-acid polypeptide reads, in one-letter code: Replication origin-binding protein (835 aa).

Residues 54–215 form the Helicase ATP-binding domain; the sequence is PGMSQTRPVT…SGLRGDENIH (162 aa). 67–74 serves as a coordination point for ATP; that stretch reads APMGSGKT.

This sequence belongs to the herpesviridae OriBP family. Homodimer. Interacts with the major DNA-binding protein. Interacts with the helicase/primase component 52 and the polymerase accessory protein.

The protein resides in the host nucleus. Functions as a docking protein to recruit essential components of the viral replication machinery to viral DNA origins. In the presence of the major DNA-binding protein, opens dsDNA leading to a conformational change in the origin that facilitates DNA unwinding and subsequent replication. The chain is Replication origin-binding protein from Varicella-zoster virus (strain Oka vaccine) (HHV-3).